The sequence spans 531 residues: Maturase K (531 aa).

Belongs to the intron maturase 2 family. MatK subfamily.

The protein localises to the plastid. It localises to the chloroplast. Functionally, usually encoded in the trnK tRNA gene intron. Probably assists in splicing its own and other chloroplast group II introns. The polypeptide is Maturase K (Ephedra sinica (Chinese ephedra)).